The chain runs to 346 residues: NADH-ubiquinone oxidoreductase chain 2 (346 aa).

The next 11 membrane-spanning stretches (helical) occupy residues 1–21 (MNPH…TITI), 25–45 (HWVL…PLIS), 60–80 (FLTQ…NAWA), 95–115 (CLLL…HFWF), 124–144 (LMTA…LLLM), 149–169 (LNPA…GWMG), 178–195 (ILAF…IILV), 200–219 (LALL…FMAL), 242–262 (ATLM…GFMP), 274–294 (EMTP…FFYL), and 326–346 (AILA…HAIV).

This sequence belongs to the complex I subunit 2 family.

The protein resides in the mitochondrion inner membrane. It catalyses the reaction a ubiquinone + NADH + 5 H(+)(in) = a ubiquinol + NAD(+) + 4 H(+)(out). Core subunit of the mitochondrial membrane respiratory chain NADH dehydrogenase (Complex I) that is believed to belong to the minimal assembly required for catalysis. Complex I functions in the transfer of electrons from NADH to the respiratory chain. The immediate electron acceptor for the enzyme is believed to be ubiquinone. The protein is NADH-ubiquinone oxidoreductase chain 2 (MT-ND2) of Mareca penelope (Eurasian wigeon).